The chain runs to 341 residues: MFYNSSKILFTTIMIIGTLITVTSNSWLGAWMGLEINLLSFIPLLSDNNNLMSTEASLKYFLTQALASTVLLFSSILLMLANNLNNEINESFTSMIIMSALLLKSGAAPFHFWFPNMMEGLTWMNALMLMTWQKIAPLMLISYLNIKNLLLISVILSVIIGAIGGLNQTSLRKLMAFSSINHLGWMLSSLMISESIWLIYFIFYSFLSFVLTFMFNIFKLFHLNQLFSWFVNSKILKFSLFMNFLSLGGLPPFLGFLPKWLVIQQLTMCNQYFLLTLMMMSTLITLFFYLRICYSAFMLNYFENNWIMEMNMNSNNTNLYLIMTFFSIFGLFLISLFFFML.

The next 10 helical transmembrane spans lie at 8–28 (ILFT…NSWL), 61–81 (FLTQ…LMLA), 95–115 (MIIM…FWFP), 121–141 (LTWM…LMLI), 146–166 (IKNL…IGGL), 174–194 (LMAF…MISE), 195–215 (SIWL…TFMF), 238–258 (FSLF…GFLP), 273–293 (FLLT…LRIC), and 321–341 (LIMT…FFML).

The protein belongs to the complex I subunit 2 family.

It localises to the mitochondrion inner membrane. The enzyme catalyses a ubiquinone + NADH + 5 H(+)(in) = a ubiquinol + NAD(+) + 4 H(+)(out). Its function is as follows. Core subunit of the mitochondrial membrane respiratory chain NADH dehydrogenase (Complex I) that is believed to belong to the minimal assembly required for catalysis. Complex I functions in the transfer of electrons from NADH to the respiratory chain. The immediate electron acceptor for the enzyme is believed to be ubiquinone. The polypeptide is NADH-ubiquinone oxidoreductase chain 2 (mt:ND2) (Drosophila yakuba (Fruit fly)).